Reading from the N-terminus, the 81-residue chain is Photosystem I iron-sulfur center (81 aa).

2 consecutive 4Fe-4S ferredoxin-type domains span residues 2-31 (SHAV…MVPW) and 37-68 (GQIA…IRVY). [4Fe-4S] cluster is bound by residues Cys-11, Cys-14, Cys-17, Cys-21, Cys-48, Cys-51, Cys-54, and Cys-58.

In terms of assembly, the cyanobacterial PSI reaction center is composed of one copy each of PsaA,B,C,D,E,F,I,J,K,L,M and X, and forms trimeric complexes. [4Fe-4S] cluster is required as a cofactor.

The protein localises to the cellular thylakoid membrane. It carries out the reaction reduced [plastocyanin] + hnu + oxidized [2Fe-2S]-[ferredoxin] = oxidized [plastocyanin] + reduced [2Fe-2S]-[ferredoxin]. Functionally, apoprotein for the two 4Fe-4S centers FA and FB of photosystem I (PSI); essential for photochemical activity. FB is the terminal electron acceptor of PSI, donating electrons to ferredoxin. The C-terminus interacts with PsaA/B/D and helps assemble the protein into the PSI complex. Required for binding of PsaD and PsaE to PSI. PSI is a plastocyanin/cytochrome c6-ferredoxin oxidoreductase, converting photonic excitation into a charge separation, which transfers an electron from the donor P700 chlorophyll pair to the spectroscopically characterized acceptors A0, A1, FX, FA and FB in turn. In Synechococcus sp. (strain WH8103), this protein is Photosystem I iron-sulfur center.